The following is a 449-amino-acid chain: MSLDSNPRIFTVSRLNAEVRLLLENEMGIVWLVGEISNLTVPVSGHWYLTLKDSQAQVKCAMFKGNNRRVNFKPQNGKQVLVKARLSLYEPRGDYQLIIESMQPEGDGRLQQEFDQLKMSLAAEGLFAQTAKKSLPEQPKRVGIITSQTGAALFDILHVLKRRDPNLPIVIYPTMVQGSGAAIQIAQAIGRANSRNECDILIVGRGGGSLEDLWCFNEEIVARTIAASEIPIVSAVGHEIDVTIADFVADVRAPTPSAAAELVSRDLSAQLQTVAHQKRRLNSAMERYLSHQQRSLSAYQHRIEKQHPQMQLNNQSQRLDDLNQRLMNHIQQRLQRQQYRVENLTLRLNNLSPTKRISQDKLHIEELKRRLLDSMDRNLLMQRHQLALAAEKLDTVSPLATLMRGYSITHNQDGKIITSTKQVELGDNITTRFADGDITSTVTKASELN.

This sequence belongs to the XseA family. In terms of assembly, heterooligomer composed of large and small subunits.

Its subcellular location is the cytoplasm. It catalyses the reaction Exonucleolytic cleavage in either 5'- to 3'- or 3'- to 5'-direction to yield nucleoside 5'-phosphates.. In terms of biological role, bidirectionally degrades single-stranded DNA into large acid-insoluble oligonucleotides, which are then degraded further into small acid-soluble oligonucleotides. In Aliivibrio fischeri (strain ATCC 700601 / ES114) (Vibrio fischeri), this protein is Exodeoxyribonuclease 7 large subunit.